A 913-amino-acid polypeptide reads, in one-letter code: Polyribonucleotide nucleotidyltransferase (913 aa).

A disordered region spans residues 407–427; sequence YMHNYEMPPYSTGETGRVGSP. Mg(2+)-binding residues include aspartate 521 and aspartate 527. The 60-residue stretch at 587 to 646 folds into the KH domain; the sequence is PRIITTSVPVEKIGEVIGPKGKMINQIQEDTGAEIAIEDDGTVFISSEGGEAAEKAKAII. The S1 motif domain occupies 658–730; it reads GETYNGKVVK…DRGKISLAIP (73 aa). Residues 727–913 form a disordered region; sequence LAIPGFEDQE…VRRDFDPFED (187 aa). Composition is skewed to basic and acidic residues over residues 742–789, 797–865, and 872–898; these read SRGD…RRSD, DRPR…DRRG, and RGSDRNPRYATDDNYDDYRADREERTE.

It belongs to the polyribonucleotide nucleotidyltransferase family. Mg(2+) is required as a cofactor.

It is found in the cytoplasm. The catalysed reaction is RNA(n+1) + phosphate = RNA(n) + a ribonucleoside 5'-diphosphate. In terms of biological role, involved in mRNA degradation. Catalyzes the phosphorolysis of single-stranded polyribonucleotides processively in the 3'- to 5'-direction. The chain is Polyribonucleotide nucleotidyltransferase from Bifidobacterium longum (strain DJO10A).